Consider the following 705-residue polypeptide: Polyphosphate kinase (705 aa).

Position 58 (Asn-58) interacts with ATP. Mg(2+)-binding residues include Arg-389 and Arg-419. The Phosphohistidine intermediate role is filled by His-449. Residues Tyr-482, Arg-578, and His-606 each coordinate ATP.

Belongs to the polyphosphate kinase 1 (PPK1) family. The cofactor is Mg(2+). In terms of processing, an intermediate of this reaction is the autophosphorylated ppk in which a phosphate is covalently linked to a histidine residue through a N-P bond.

It catalyses the reaction [phosphate](n) + ATP = [phosphate](n+1) + ADP. Catalyzes the reversible transfer of the terminal phosphate of ATP to form a long-chain polyphosphate (polyP). In Halalkalibacterium halodurans (strain ATCC BAA-125 / DSM 18197 / FERM 7344 / JCM 9153 / C-125) (Bacillus halodurans), this protein is Polyphosphate kinase.